A 721-amino-acid polypeptide reads, in one-letter code: Polyribonucleotide nucleotidyltransferase (721 aa).

Positions 495 and 501 each coordinate Mg(2+). Residues 562-621 enclose the KH domain; sequence PRLLSFRIDPELIGTVIGPGGRTIKGITERTNTKIDIEDGGIVTIASHDGAAAEEAQKII. Residues 631–699 form the S1 motif domain; sequence GEVFSGSITR…NRGRINLTLR (69 aa).

It belongs to the polyribonucleotide nucleotidyltransferase family. The cofactor is Mg(2+).

It localises to the cytoplasm. The catalysed reaction is RNA(n+1) + phosphate = RNA(n) + a ribonucleoside 5'-diphosphate. Involved in mRNA degradation. Catalyzes the phosphorolysis of single-stranded polyribonucleotides processively in the 3'- to 5'-direction. This is Polyribonucleotide nucleotidyltransferase from Synechococcus sp. (strain CC9605).